A 662-amino-acid polypeptide reads, in one-letter code: Protein Aster-C (662 aa).

Positions 1–34 (MEGAPTVRQVMNEGDSSLATELQEDVEENPSPTV) are disordered. The 68-residue stretch at 69 to 136 (EEYRRQFTHL…KNITFMTKEK (68 aa)) folds into the GRAM domain. 2 disordered regions span residues 212–237 (SIED…EKLS) and 250–284 (VSET…LPTL). Positions 265–276 (LGKEESQNEKQT) are enriched in basic and acidic residues. The 172-residue stretch at 326 to 497 (HGRLFINRIF…DLLIEESILN (172 aa)) folds into the VASt domain. A helical membrane pass occupies residues 557–577 (LIVVMSIFVLLLVLLNVTLFL).

The protein localises to the endoplasmic reticulum membrane. The protein resides in the cell membrane. Functionally, cholesterol transporter that mediates non-vesicular transport of cholesterol from the plasma membrane (PM) to the endoplasmic reticulum (ER). Contains unique domains for binding cholesterol and the PM, thereby serving as a molecular bridge for the transfer of cholesterol from the PM to the ER. Plays a crucial role in cholesterol homeostasis and has the unique ability to localize to the PM based on the level of membrane cholesterol. In lipid-poor conditions localizes to the ER membrane and in response to excess cholesterol in the PM is recruited to the endoplasmic reticulum-plasma membrane contact sites (EPCS) which is mediated by the GRAM domain. At the EPCS, the sterol-binding VASt/ASTER domain binds to the cholesterol in the PM and facilitates its transfer from the PM to ER. The protein is Protein Aster-C (GRAMD1C) of Pongo abelii (Sumatran orangutan).